A 128-amino-acid chain; its full sequence is Small ribosomal subunit protein uS11 (128 aa).

This sequence belongs to the universal ribosomal protein uS11 family. Part of the 30S ribosomal subunit. Interacts with proteins S7 and S18. Binds to IF-3.

Its function is as follows. Located on the platform of the 30S subunit, it bridges several disparate RNA helices of the 16S rRNA. Forms part of the Shine-Dalgarno cleft in the 70S ribosome. The chain is Small ribosomal subunit protein uS11 from Phytoplasma australiense.